The following is a 206-amino-acid chain: dITP/XTP pyrophosphatase (206 aa).

T7 to K12 lines the substrate pocket. D74 (proton acceptor) is an active-site residue. Position 74 (D74) interacts with Mg(2+). Residues S75, F159–D162, K182, and H187–R188 each bind substrate.

This sequence belongs to the HAM1 NTPase family. In terms of assembly, homodimer. Mg(2+) serves as cofactor.

It catalyses the reaction XTP + H2O = XMP + diphosphate + H(+). It carries out the reaction dITP + H2O = dIMP + diphosphate + H(+). The enzyme catalyses ITP + H2O = IMP + diphosphate + H(+). Functionally, pyrophosphatase that catalyzes the hydrolysis of nucleoside triphosphates to their monophosphate derivatives, with a high preference for the non-canonical purine nucleotides XTP (xanthosine triphosphate), dITP (deoxyinosine triphosphate) and ITP. Seems to function as a house-cleaning enzyme that removes non-canonical purine nucleotides from the nucleotide pool, thus preventing their incorporation into DNA/RNA and avoiding chromosomal lesions. In Campylobacter hominis (strain ATCC BAA-381 / DSM 21671 / CCUG 45161 / LMG 19568 / NCTC 13146 / CH001A), this protein is dITP/XTP pyrophosphatase.